The following is a 1235-amino-acid chain: Cullin-associated NEDD8-dissociated protein 2 (1235 aa).

Ser-2 bears the N-acetylserine mark. HEAT repeat units follow at residues 2–39 (STGAFYISSLLEKMTSSDKDFRFMATSDLMSELQKDSI), 44–81 (DSERKVVRTLLRLLEDRSGEVQNLAVKCLGPLVGKVKE), 83–119 (QVENIVDTLCANMRSDKEQLRDIAGIGLKTVLSELPP), 129–167 (NVCRKITGQLTSAIAQQEDVAVQLEALDILSDMLSRLGA), 171–208 (TFHASLLHCLLPQLSSPRLAVRKRTVVALGHLAAACST), 210–246 (LFVELADHLVDRLPGPRAPASPAAIRTLIQCLGSVGR), 254–291 (AHLDRLVPMVEEFCNLDDDELRESCLQAFEAFLRKCPK), 326–367 (TEDS…SRPD), 371–408 (DFHCTLAPALIRRFKEREENVKADIFGAYIMLLRHTRP), 431–468 (AQVPLVIKALQRQLKDRNVRTRQGCFNLFTELAGVLPG), 516–553 (PHLPTLLPPVMACVADPFYKVAAEALLVLQELVRTLWP), 564–603 (PYVGEMSTATLARLRATDLDQEVKERAISCVGHLVGHLGD), 607–644 (DDLEPTLMLLLDRLRNEITRLPAVKALTLVAMSPLRLD), 647–684 (PILAEALPILASFLRKNQRALRLATLAALDALAQSQGL), 689–726 (PAVRTVLTELPALVSENDMHVAQLAVDFLTTVTQTQPS), 730–769 (EVSGPVLGELLQLLHSPLLPAGVLAATEGFLQALVGTRPP), 771–812 (VEYS…ALSA), 856–893 (GPQRELKTVLLEALGSPSEDVRAAAAYALGRVGAGNLP), 895–930 (FLPFLLAQIEAQPRRQYLLLHALREALGAAQPDNLK), 932–965 (YVEDVWALLFQRCESPEEGTRCVVAECIGKLVFV), 966–1002 (NPPYLLPRFRKQLAAGQPYTRSTVITAVKFLISDQPH), 1006–1043 (PLLKSFIAEFMESLQDPDLNVRRATLTFFNSAVHNKPS), 1047–1083 (DLLDDILPLLYQETKIRRDLIREVEMGPFKHTVDDGL), 1104–1140 (LDMCEFLNHVEDGLKDHYDIRMLTFIMLARLATLCPA), 1156–1193 (TCTAKVKAGSVKQELEKQEELKRSAMRAVAALLTNPEV), and 1203–1235 (SAQIRSNPELTTLFESIQKDTASGPSTDSMELS). The tract at residues 314-345 (YDHDSDDEEQMETEDSEFSEQESEDEYSDDDD) is disordered. Positions 317–345 (DSDDEEQMETEDSEFSEQESEDEYSDDDD) are enriched in acidic residues.

Belongs to the CAND family. As to quaternary structure, binds TBP, CNOT3 and UBE3C. In terms of processing, ubiquitinated and targeted for proteasomal degradation. In terms of tissue distribution, highly expressed in embryonic limb buds.

The protein localises to the nucleus. Probable assembly factor of SCF (SKP1-CUL1-F-box protein) E3 ubiquitin ligase complexes that promotes the exchange of the substrate-recognition F-box subunit in SCF complexes, thereby playing a key role in the cellular repertoire of SCF complexes. This Mus musculus (Mouse) protein is Cullin-associated NEDD8-dissociated protein 2 (Cand2).